The following is a 34-amino-acid chain: Phalloidin proprotein (34 aa).

A propeptide spanning residues 1–10 (MSDINASRLP) is cleaved from the precursor. The cyclopeptide (Ala-Pro) cross-link spans 11–17 (AWLATCP). Positions 12–16 (WLATC) form a cross-link, 2'-cysteinyl-6'-hydroxytryptophan sulfoxide (Trp-Cys). A propeptide spanning residues 18–34 (CVGDDVNPTLSRGESLC) is cleaved from the precursor.

This sequence belongs to the MSDIN fungal toxin family. In terms of processing, processed by the macrocyclase-peptidase enzyme POPB to yield a toxic cyclic heptapeptide. POPB first removes 10 residues from the N-terminus. Conformational trapping of the remaining peptide forces the enzyme to release this intermediate rather than proceed to macrocyclization. The enzyme rebinds the remaining peptide in a different conformation and catalyzes macrocyclization of the N-terminal 7 residues.

Toxin that belongs to the bicyclic heptapeptides called phallotoxins. Although structurally related to amatoxins, phallotoxins have a different mode of action, which is the stabilization of F-actin. Phallotoxins are poisonous when administered parenterally, but not orally because of poor absorption. The polypeptide is Phalloidin proprotein (Amanita phalloides (Death cap)).